Consider the following 241-residue polypeptide: Gamma-interferon-inducible lysosomal thiol reductase-like protein (241 aa).

The signal sequence occupies residues 1–18 (MLFKSLLLLSVYAVTCYG). N-linked (GlcNAc...) asparagine glycans are attached at residues Asn105 and Asn152. The chain crosses the membrane as a helical span at residues 218-235 (STGSAISSLGMIVTVVAV).

It belongs to the GILT family. In terms of tissue distribution, salivary gland (at protein level). Low-level expression in midgut (at protein level). Expressed in head and leg tissues. Ovary. Fat body. (Microbial infection) Detected with Plasmodium berghei sporozoites isolated from the saliva of infected Anopheles gambiae mosquitoes (at protein level).

It localises to the membrane. Required for normal development of ovary and testis. Functionally, (Microbial infection) Interacts with the surface of Plasmodium berghei sporozoites. Reduces P.berghei sporozoite cell traversal activity and transmission. Limits the motility of P.berghei sporozoites. Decreases the levels of host liver infection by P.berghei sporozoites. Does not affect P.berghei sporozoite viability. Indirectly promotes P.berghei survival in mosquitoes by influencing ovarian development and the subsequent production of 20-hydroxyecdysone and vitellogenin, which, in turn, modulates TEP1-dependent parasite killing. Promotes P.berghei infection in mosquitoes, most likely impacting the oocyst stage of parasite development. In terms of biological role, (Microbial infection) Promotes Plasmodium falciparum survival in mosquitoes. This Anopheles gambiae (African malaria mosquito) protein is Gamma-interferon-inducible lysosomal thiol reductase-like protein.